The following is a 485-amino-acid chain: E3 ubiquitin-protein ligase TRIM68 (485 aa).

The RING-type zinc finger occupies 16 to 61 (CPICMTFLREPVSISCGHTFCHSCLSGLWKLPGESQNLSYTCPLCR). The B box-type zinc finger occupies 93–134 (LKTDVCDLHKEQLTMFCKEDDMVTCEACKQSPEHEAHSVVPI). Zn(2+) is bound by residues cysteine 98, histidine 101, cysteine 120, and histidine 126. A coiled-coil region spans residues 144–226 (KLQQALEHLR…EQEKGETASK (83 aa)). The B30.2/SPRY domain occupies 285-483 (LKTDCRVLGL…TPLTICTLGG (199 aa)).

It belongs to the TRIM/RBCC family. In terms of assembly, interacts with AR/androgen receptor (via ligand-binding domain). Interacts with KAT5/TIP60. Post-translationally, auto-ubiquitinated.

The protein resides in the cytoplasm. Its subcellular location is the perinuclear region. It is found in the nucleus. The catalysed reaction is S-ubiquitinyl-[E2 ubiquitin-conjugating enzyme]-L-cysteine + [acceptor protein]-L-lysine = [E2 ubiquitin-conjugating enzyme]-L-cysteine + N(6)-ubiquitinyl-[acceptor protein]-L-lysine.. The protein operates within protein modification; protein ubiquitination. Functionally, functions as a ubiquitin E3 ligase. Acts as a coactivator of androgen receptor (AR) depending on its ubiquitin ligase activity. The protein is E3 ubiquitin-protein ligase TRIM68 (Trim68) of Mus musculus (Mouse).